The chain runs to 226 residues: Ribonuclease 3 (226 aa).

The region spanning 6–128 (TKKIQKVLGY…LIGSIYLDSN (123 aa)) is the RNase III domain. E41 is a binding site for Mg(2+). D45 is an active-site residue. Mg(2+) is bound by residues N114 and E117. Residue E117 is part of the active site. In terms of domain architecture, DRBM spans 155-225 (DPKTRLQEYL…AQKALIKLGV (71 aa)).

The protein belongs to the ribonuclease III family. In terms of assembly, homodimer. Requires Mg(2+) as cofactor.

It is found in the cytoplasm. The catalysed reaction is Endonucleolytic cleavage to 5'-phosphomonoester.. Digests double-stranded RNA. Involved in the processing of primary rRNA transcript to yield the immediate precursors to the large and small rRNAs (23S and 16S). Processes some mRNAs, and tRNAs when they are encoded in the rRNA operon. Processes pre-crRNA and tracrRNA of type II CRISPR loci if present in the organism. The protein is Ribonuclease 3 of Buchnera aphidicola subsp. Acyrthosiphon pisum (strain 5A).